A 477-amino-acid chain; its full sequence is Glycogen synthase (477 aa).

K15 contacts ADP-alpha-D-glucose.

It belongs to the glycosyltransferase 1 family. Bacterial/plant glycogen synthase subfamily.

The catalysed reaction is [(1-&gt;4)-alpha-D-glucosyl](n) + ADP-alpha-D-glucose = [(1-&gt;4)-alpha-D-glucosyl](n+1) + ADP + H(+). Its pathway is glycan biosynthesis; glycogen biosynthesis. In terms of biological role, synthesizes alpha-1,4-glucan chains using ADP-glucose. The sequence is that of Glycogen synthase from Shigella flexneri serotype 5b (strain 8401).